The sequence spans 183 residues: Potassium-transporting ATPase KdpC subunit (183 aa).

Residues 11–31 traverse the membrane as a helical segment; the sequence is LALLMTLLTGVLYPLAVTGVA.

The protein belongs to the KdpC family. The system is composed of three essential subunits: KdpA, KdpB and KdpC.

It localises to the cell inner membrane. Part of the high-affinity ATP-driven potassium transport (or Kdp) system, which catalyzes the hydrolysis of ATP coupled with the electrogenic transport of potassium into the cytoplasm. This subunit acts as a catalytic chaperone that increases the ATP-binding affinity of the ATP-hydrolyzing subunit KdpB by the formation of a transient KdpB/KdpC/ATP ternary complex. This Pseudomonas putida (strain GB-1) protein is Potassium-transporting ATPase KdpC subunit.